Consider the following 261-residue polypeptide: MADAGQQRPLTAFAPPPPLWKHFTPDNLKKLDEIKKNASKGEDGKPQKKKWTPTELRALDVPPELHFLVPPEIPKSGHYSVFGELQSLSTALPSLQDQGITQLYPSPPTGDADREQPSEPSQPLNHAYYLLKISKSLLLNFLEFVGILSVAPEQFESKVEDLRNLFINAHHLLNLYRPHQARESLILMMEEQLSRTREEIQQMDKLKEEITGALEQLKKDGVDVDAAPIEAPDNDTKKPNVSEEKAIEDTRLVWELLDENN.

Disordered regions lie at residues 1–56 (MADA…PTEL), 99–121 (GITQ…SEPS), and 223–244 (DVDA…VSEE). The segment covering 23–46 (FTPDNLKKLDEIKKNASKGEDGKP) has biased composition (basic and acidic residues). A compositionally biased stretch (basic and acidic residues) spans 234-244 (NDTKKPNVSEE).

The protein belongs to the Mediator complex subunit 7 family. In terms of assembly, component of the Mediator complex.

It localises to the nucleus. Component of the Mediator complex, a coactivator involved in the regulated transcription of nearly all RNA polymerase II-dependent genes. Mediator functions as a bridge to convey information from gene-specific regulatory proteins to the basal RNA polymerase II transcription machinery. Mediator is recruited to promoters by direct interactions with regulatory proteins and serves as a scaffold for the assembly of a functional preinitiation complex with RNA polymerase II and the general transcription factors. This is Mediator of RNA polymerase II transcription subunit 7 (med7) from Aspergillus oryzae (strain ATCC 42149 / RIB 40) (Yellow koji mold).